The sequence spans 413 residues: Calmodulin-binding protein CmbB (413 aa).

6 FNIP repeats span residues 104–148 (FNHP…LSDC), 149–192 (YNQA…LGKG), 222–257 (SLPPNLEFLLLSDAFNHPIEAGMLPPKLKTLTFGDG), 258–301 (FNQP…FHQF), 304–343 (FSQTFENIPSHVQTVEFGYTYNKPITSLPSHLKYIKFSEK), and 344–386 (YNHP…LNGY).

Interacts with calmodulin in the presence of Ca(2+).

In Dictyostelium discoideum (Social amoeba), this protein is Calmodulin-binding protein CmbB.